A 467-amino-acid chain; its full sequence is UDP-N-acetylmuramoylalanine--D-glutamate ligase (467 aa).

121–127 (GTNGKST) contacts ATP.

This sequence belongs to the MurCDEF family.

The protein resides in the cytoplasm. The enzyme catalyses UDP-N-acetyl-alpha-D-muramoyl-L-alanine + D-glutamate + ATP = UDP-N-acetyl-alpha-D-muramoyl-L-alanyl-D-glutamate + ADP + phosphate + H(+). It participates in cell wall biogenesis; peptidoglycan biosynthesis. Functionally, cell wall formation. Catalyzes the addition of glutamate to the nucleotide precursor UDP-N-acetylmuramoyl-L-alanine (UMA). The polypeptide is UDP-N-acetylmuramoylalanine--D-glutamate ligase (Brucella suis biovar 1 (strain 1330)).